We begin with the raw amino-acid sequence, 477 residues long: Epoxyalcohol synthase CYP5164B1 (477 aa).

C421 contacts heme.

Belongs to the cytochrome P450 family. It depends on heme as a cofactor.

The catalysed reaction is (9S)-hydroperoxy-(10E,12Z)-octadecadienoate = (11S)-hydroxy-(9S,10S)-epoxy-(12Z)-octadecenoate. The enzyme catalyses (13S)-hydroperoxy-(9Z,11E)-octadecadienoate = 11-hydroxy-12,13-epoxy-(9Z)-octadecenoate. It participates in lipid metabolism; oxylipin biosynthesis. In terms of biological role, cytochrome P450 epoxyalcohol synthase involved in the metabolism of oxylipins 'ectocarpins' natural products, such as hybridalactone, ecklonilactones and derivatives. Isomerizes the hydroperoxides into epoxyalcohols via epoxyallylic radical. Can use linoleic acid 9-hydroperoxide ((9S,10E,12Z)-9-hydroperoxy-10,12-octadecadienoic, 9-HPOD) as preferred substrate to produce (9S,10S,11S,12Z)-9,10-epoxy-11-hydroxy-12-octadecenoic acid and, to a lower extent, active with linoleate 13-hydroperoxide ((9Z,11E,13S)-13-hydroperoxy-9,11-octadecadienoic, 13-HPOD) to produce 11-hydroxy-12,13-epoxy-9-octadecenoic acid. No activity toward alpha-linolenic acid 9- and 13-hydroperoxides, and toward eicosapentaenoic acid 15-hydroperoxide. The chain is Epoxyalcohol synthase CYP5164B1 from Ectocarpus siliculosus (Brown alga).